Here is a 125-residue protein sequence, read N- to C-terminus: Small ribosomal subunit protein uS13 (125 aa).

Positions Thr90–Lys125 are disordered.

It belongs to the universal ribosomal protein uS13 family. As to quaternary structure, part of the 30S ribosomal subunit. Forms a loose heterodimer with protein S19. Forms two bridges to the 50S subunit in the 70S ribosome.

Located at the top of the head of the 30S subunit, it contacts several helices of the 16S rRNA. In the 70S ribosome it contacts the 23S rRNA (bridge B1a) and protein L5 of the 50S subunit (bridge B1b), connecting the 2 subunits; these bridges are implicated in subunit movement. Contacts the tRNAs in the A and P-sites. The protein is Small ribosomal subunit protein uS13 of Gemmatimonas aurantiaca (strain DSM 14586 / JCM 11422 / NBRC 100505 / T-27).